The chain runs to 253 residues: Succinate dehydrogenase [ubiquinone] iron-sulfur subunit, mitochondrial (253 aa).

Residues 23–114 (FKIYRWNPDK…TTKIYPLPHM (92 aa)) form the 2Fe-2S ferredoxin-type domain. Residues C74, C79, C82, and C94 each coordinate [2Fe-2S] cluster. Positions 156-186 (DRKKLDGLYECILCACCSTSCPSYWWNQEEY) constitute a 4Fe-4S ferredoxin-type domain. C166, C169, and C172 together coordinate [4Fe-4S] cluster. C176 lines the [3Fe-4S] cluster pocket. A ubiquinone is bound at residue W181. Residues C223 and C229 each contribute to the [3Fe-4S] cluster site. C233 is a [4Fe-4S] cluster binding site.

It belongs to the succinate dehydrogenase/fumarate reductase iron-sulfur protein family. As to quaternary structure, component of complex II composed of four subunits: a flavoprotein (FP), an iron-sulfur protein (IP), and a cytochrome b composed of a large and a small subunit. Requires [2Fe-2S] cluster as cofactor. The cofactor is [3Fe-4S] cluster. It depends on [4Fe-4S] cluster as a cofactor.

Its subcellular location is the mitochondrion inner membrane. It carries out the reaction a quinone + succinate = fumarate + a quinol. Its pathway is carbohydrate metabolism; tricarboxylic acid cycle; fumarate from succinate (eukaryal route): step 1/1. In terms of biological role, iron-sulfur protein (IP) subunit of succinate dehydrogenase (SDH) that is involved in complex II of the mitochondrial electron transport chain and is responsible for transferring electrons from succinate to ubiquinone (coenzyme Q). In Candida glabrata (strain ATCC 2001 / BCRC 20586 / JCM 3761 / NBRC 0622 / NRRL Y-65 / CBS 138) (Yeast), this protein is Succinate dehydrogenase [ubiquinone] iron-sulfur subunit, mitochondrial (SDH2).